We begin with the raw amino-acid sequence, 98 residues long: U10-barytoxin-Tl1a (98 aa).

A signal peptide spans 1-21 (MKTLVLVAVLGVASLYLLSSA). The propeptide occupies 22–50 (SEVQQLSPAEEEFRAFVSTFGGLFETEER). Cystine bridges form between Cys-57–Cys-71, Cys-64–Cys-76, and Cys-70–Cys-89.

The protein belongs to the neurotoxin 10 (Hwtx-1) family. 27 (ICK-3) subfamily. Expressed by the venom gland.

Its subcellular location is the secreted. Ion channel inhibitor. In Trittame loki (Brush-footed trapdoor spider), this protein is U10-barytoxin-Tl1a.